The primary structure comprises 312 residues: Telomere-binding protein OPG077 (312 aa).

The protein belongs to the orthopoxvirus OPG077 family.

The protein resides in the virion. DNA-binding protein which binds to the hairpin form of the viral telomeric sequence. Required for the production of mature virions (MV). The chain is Telomere-binding protein OPG077 (OPG077) from Rabbitpox virus (strain Utrecht) (RPV).